The sequence spans 220 residues: Fructose-6-phosphate aldolase (220 aa).

The active-site Schiff-base intermediate with substrate is Lys85.

The protein belongs to the transaldolase family. Type 3A subfamily. As to quaternary structure, homodecamer.

The protein localises to the cytoplasm. It carries out the reaction beta-D-fructose 6-phosphate = dihydroxyacetone + D-glyceraldehyde 3-phosphate. In terms of biological role, catalyzes the reversible formation of fructose 6-phosphate from dihydroxyacetone and D-glyceraldehyde 3-phosphate via an aldolization reaction. The polypeptide is Fructose-6-phosphate aldolase (Salmonella schwarzengrund (strain CVM19633)).